We begin with the raw amino-acid sequence, 224 residues long: Oxygen-evolving enhancer protein 3-1, chloroplastic (224 aa).

The transit peptide at 1-44 (MASMGGLHGASPAVLEGSLKINGSSRLNGSGRVAVAQRSRLVVR) directs the protein to the chloroplast. Residues 45-75 (AQQSEETSRRSVIGLVAAGLAGGSFVQAVLA) constitute a thylakoid transit peptide. Thr189 is modified (phosphothreonine). Tyr209 carries the phosphotyrosine modification. A Phosphothreonine modification is found at Thr212.

It belongs to the PsbQ family. As to expression, expressed in green tissue, with high steady-state mRNA levels in leaves. Not expressed in roots.

Its subcellular location is the plastid. It is found in the chloroplast thylakoid membrane. Functionally, required for photosystem II assembly/stability and photoautotrophic growth under low light conditions. This chain is Oxygen-evolving enhancer protein 3-1, chloroplastic (PSBQ1), found in Arabidopsis thaliana (Mouse-ear cress).